Reading from the N-terminus, the 319-residue chain is Thioredoxin reductase (319 aa).

Residue 36-43 (TGINKGGQ) coordinates FAD. Cys-136 and Cys-139 are disulfide-bonded. 288-297 (DVIDHVYRQA) is a binding site for FAD.

The protein belongs to the class-II pyridine nucleotide-disulfide oxidoreductase family. As to quaternary structure, homodimer. Requires FAD as cofactor.

Its subcellular location is the cytoplasm. The enzyme catalyses [thioredoxin]-dithiol + NADP(+) = [thioredoxin]-disulfide + NADPH + H(+). The polypeptide is Thioredoxin reductase (trxB) (Buchnera aphidicola subsp. Schizaphis graminum (strain Sg)).